Here is a 297-residue protein sequence, read N- to C-terminus: Protein CANDIDATE G-PROTEIN COUPLED RECEPTOR 8 (297 aa).

An N-linked (GlcNAc...) asparagine glycan is attached at Asn-20. The next 7 helical transmembrane spans lie at 34 to 54 (GFLH…YLAY), 70 to 90 (IMIA…AWCC), 107 to 127 (LTLF…AFLF), 142 to 162 (FLIS…FLFG), 180 to 200 (WGLW…VFLM), 215 to 235 (FYNY…ASAF), and 242 to 262 (FGFW…LPLL).

The protein belongs to the UPF0359 family.

The protein resides in the membrane. In terms of biological role, G-protein coupled receptor. Plays a role in plants and microbes interactions. This chain is Protein CANDIDATE G-PROTEIN COUPLED RECEPTOR 8, found in Arabidopsis thaliana (Mouse-ear cress).